The sequence spans 128 residues: Serum amyloid A-4 protein (128 aa).

The N-terminal stretch at 1-18 (MKLFIGLIFCSLVMGVSS) is a signal peptide. A disordered region spans residues 93 to 128 (SSEREEDQVSNRRAEEWGRSGQDPDHFRPAGLPKKY). Residues 99–120 (DQVSNRRAEEWGRSGQDPDHFR) show a composition bias toward basic and acidic residues.

It belongs to the SAA family. Apolipoprotein of the HDL complex.

It is found in the secreted. In terms of biological role, major acute phase reactant. This is Serum amyloid A-4 protein from Sus scrofa (Pig).